Consider the following 619-residue polypeptide: Putative zinc metalloprotease CT_072 (619 aa).

H20 serves as a coordination point for Zn(2+). E21 is a catalytic residue. H24 is a binding site for Zn(2+). The next 3 helical transmembrane spans lie at 103–125 (IFVL…GILY), 558–580 (VLNL…WEIL), and 593–610 (ALVP…FLTL).

The protein belongs to the peptidase M50B family. The cofactor is Zn(2+).

The protein resides in the cell inner membrane. The protein is Putative zinc metalloprotease CT_072 of Chlamydia trachomatis serovar D (strain ATCC VR-885 / DSM 19411 / UW-3/Cx).